Reading from the N-terminus, the 366-residue chain is Methylthioribose-1-phosphate isomerase (366 aa).

Residues 53-55 (RGA), R90, and Q203 contribute to the substrate site. D244 serves as the catalytic Proton donor. 254–255 (NK) lines the substrate pocket.

It belongs to the eIF-2B alpha/beta/delta subunits family. MtnA subfamily.

The catalysed reaction is 5-(methylsulfanyl)-alpha-D-ribose 1-phosphate = 5-(methylsulfanyl)-D-ribulose 1-phosphate. Its pathway is amino-acid biosynthesis; L-methionine biosynthesis via salvage pathway; L-methionine from S-methyl-5-thio-alpha-D-ribose 1-phosphate: step 1/6. Catalyzes the interconversion of methylthioribose-1-phosphate (MTR-1-P) into methylthioribulose-1-phosphate (MTRu-1-P). The protein is Methylthioribose-1-phosphate isomerase of Methylocella silvestris (strain DSM 15510 / CIP 108128 / LMG 27833 / NCIMB 13906 / BL2).